A 727-amino-acid polypeptide reads, in one-letter code: AN1-type zinc finger protein 4 (727 aa).

In terms of domain architecture, Ubiquitin-like spans 28–103 (MELFIETLTG…LKLVLAMRGG (76 aa)). 2 disordered regions span residues 187–217 (HRMSGGSMYNSDTDEDEETEPSSSGQQIIEN) and 238–264 (KKPKKAVKIKPHPPVAPRPSSGSTAPS). Residues 238 to 248 (KKPKKAVKIKP) show a composition bias toward basic residues. An AN1-type zinc finger spans residues 661 to 708 (KKTTNHCFLCGKKTGLASSYECRCGNNFCASHRYAETHGCTYDYKSAG). Zn(2+)-binding residues include Cys667, Cys670, Cys682, Cys684, Cys689, His692, His698, and Cys700.

The polypeptide is AN1-type zinc finger protein 4 (ZFAND4) (Homo sapiens (Human)).